The chain runs to 99 residues: (4S)-4-hydroxy-5-phosphonooxypentane-2,3-dione isomerase (99 aa).

The ABM domain occupies 2–91 (HVTLVEINVK…ISEPRKKRSF (90 aa)).

It belongs to the LsrG family. In terms of assembly, homodimer.

The protein localises to the cytoplasm. It catalyses the reaction (2S)-2-hydroxy-3,4-dioxopentyl phosphate = 3-hydroxy-2,4-dioxopentyl phosphate. Involved in the degradation of phospho-AI-2, thereby terminating induction of the lsr operon and closing the AI-2 signaling cycle. Catalyzes the conversion of (4S)-4-hydroxy-5-phosphonooxypentane-2,3-dione (P-DPD) to 3-hydroxy-5-phosphonooxypentane-2,4-dione (P-HPD). In Photorhabdus laumondii subsp. laumondii (strain DSM 15139 / CIP 105565 / TT01) (Photorhabdus luminescens subsp. laumondii), this protein is (4S)-4-hydroxy-5-phosphonooxypentane-2,3-dione isomerase.